Reading from the N-terminus, the 197-residue chain is Holliday junction branch migration complex subunit RuvA (197 aa).

Residues 1–63 (MFEYLNGKLV…EDAHSLYGFV (63 aa)) form a domain I region. Positions 64–142 (NESEKALFLR…ATGAVGISLL (79 aa)) are domain II. The tract at residues 142–146 (LDAAP) is flexible linker. Residues 147–197 (AGNLALEEAIEALQALGYKATELKKIEKKLEQEAGLTSEEYIKSALKLMMK) are domain III.

The protein belongs to the RuvA family. As to quaternary structure, homotetramer. Forms an RuvA(8)-RuvB(12)-Holliday junction (HJ) complex. HJ DNA is sandwiched between 2 RuvA tetramers; dsDNA enters through RuvA and exits via RuvB. An RuvB hexamer assembles on each DNA strand where it exits the tetramer. Each RuvB hexamer is contacted by two RuvA subunits (via domain III) on 2 adjacent RuvB subunits; this complex drives branch migration. In the full resolvosome a probable DNA-RuvA(4)-RuvB(12)-RuvC(2) complex forms which resolves the HJ.

The protein localises to the cytoplasm. Its function is as follows. The RuvA-RuvB-RuvC complex processes Holliday junction (HJ) DNA during genetic recombination and DNA repair, while the RuvA-RuvB complex plays an important role in the rescue of blocked DNA replication forks via replication fork reversal (RFR). RuvA specifically binds to HJ cruciform DNA, conferring on it an open structure. The RuvB hexamer acts as an ATP-dependent pump, pulling dsDNA into and through the RuvAB complex. HJ branch migration allows RuvC to scan DNA until it finds its consensus sequence, where it cleaves and resolves the cruciform DNA. The protein is Holliday junction branch migration complex subunit RuvA of Lactococcus lactis subsp. cremoris (strain SK11).